We begin with the raw amino-acid sequence, 121 residues long: Alpha-endosulfine (121 aa).

A disordered region spans residues 1-53 (MSQKQEEENPAEETGEEKQDTQEKEGILPEKAEEAKLKAKYPSLGQKPGGSDF). N-acetylserine is present on serine 2. Phosphoserine is present on serine 2. Basic and acidic residues predominate over residues 16-37 (EEKQDTQEKEGILPEKAEEAKL). Threonine 21 is modified (phosphothreonine). Serine 43 is modified (phosphoserine). Position 67 is a phosphoserine; by GWL (serine 67). The segment at 79-121 (NKQLPSAGPDKNLVTGDHIPTPQDLPQRKSSLVTSKLAGGQVE) is disordered. Position 109 is a phosphoserine; by PKA (serine 109).

This sequence belongs to the endosulfine family. Interacts (when phosphorylated at Ser-67) with PPP2R2D. Interacts with ABCC8. Interacts with SNCA; interaction is disrupted when phosphorylated at Ser-109. Phosphorylation at Ser-67 by GWL during mitosis is essential for interaction with PPP2R2D (PR55-delta) and subsequent inactivation of PP2A. Phosphorylated by PKA.

The protein resides in the cytoplasm. In terms of biological role, protein phosphatase inhibitor that specifically inhibits protein phosphatase 2A (PP2A) during mitosis. When phosphorylated at Ser-67 during mitosis, specifically interacts with PPP2R2D (PR55-delta) and inhibits its activity, leading to inactivation of PP2A, an essential condition to keep cyclin-B1-CDK1 activity high during M phase. Also acts as a stimulator of insulin secretion by interacting with sulfonylurea receptor (ABCC8), thereby preventing sulfonylurea from binding to its receptor and reducing K(ATP) channel currents. The chain is Alpha-endosulfine (ENSA) from Bos taurus (Bovine).